Reading from the N-terminus, the 255-residue chain is Malonyl-[acyl-carrier protein] O-methyltransferase (255 aa).

This sequence belongs to the methyltransferase superfamily.

It catalyses the reaction malonyl-[ACP] + S-adenosyl-L-methionine = malonyl-[ACP] methyl ester + S-adenosyl-L-homocysteine. It participates in cofactor biosynthesis; biotin biosynthesis. In terms of biological role, converts the free carboxyl group of a malonyl-thioester to its methyl ester by transfer of a methyl group from S-adenosyl-L-methionine (SAM). It allows to synthesize pimeloyl-ACP via the fatty acid synthetic pathway. The protein is Malonyl-[acyl-carrier protein] O-methyltransferase of Serratia marcescens.